We begin with the raw amino-acid sequence, 292 residues long: uncharacterized protein (292 aa).

Catalysis depends on charge relay system residues Ser-44 and Tyr-106. Tyr-132 serves as the catalytic Proton donor. The active-site Schiff-base intermediate with substrate is Lys-161.

Belongs to the DapA family. In terms of assembly, homotetramer.

It localises to the cytoplasm. This is an uncharacterized protein from Thermoplasma acidophilum (strain ATCC 25905 / DSM 1728 / JCM 9062 / NBRC 15155 / AMRC-C165).